A 709-amino-acid polypeptide reads, in one-letter code: Polyribonucleotide nucleotidyltransferase (709 aa).

Mg(2+) contacts are provided by Asp-489 and Asp-495. One can recognise a KH domain in the interval 556 to 615; that stretch reads PKIDMIKIDVDKIKVVIGKGGETIDKIIAETGVKIDIDEEGNVSIFSSDQAAIDRTKDII. The region spanning 625–693 is the S1 motif domain; that stretch reads GEVYHAKVVR…DKGRVDASMK (69 aa).

This sequence belongs to the polyribonucleotide nucleotidyltransferase family. The cofactor is Mg(2+).

Its subcellular location is the cytoplasm. The enzyme catalyses RNA(n+1) + phosphate = RNA(n) + a ribonucleoside 5'-diphosphate. In terms of biological role, involved in mRNA degradation. Catalyzes the phosphorolysis of single-stranded polyribonucleotides processively in the 3'- to 5'-direction. This chain is Polyribonucleotide nucleotidyltransferase, found in Streptococcus agalactiae serotype III (strain NEM316).